Here is an 84-residue protein sequence, read N- to C-terminus: uncharacterized protein (84 aa).

This is an uncharacterized protein from Orgyia pseudotsugata multicapsid polyhedrosis virus (OpMNPV).